A 56-amino-acid chain; its full sequence is MLQTNSMLIFPAKRHLQDGHYLAGRLQFLYQLGQLLMRLQLQQHPLVIKYGQVQMV.

This is an uncharacterized protein from Acheta domesticus (House cricket).